The chain runs to 63 residues: Toxin Tx7335 (63 aa).

4 disulfide bridges follow: Cys-3–Cys-24, Cys-17–Cys-39, Cys-25–Cys-55, and Cys-56–Cys-61.

Post-translationally, contains 4 disulfide bonds. As to expression, expressed by the venom gland.

The protein localises to the secreted. Its function is as follows. Activates bacterial pH-gated potassium channel KcsA by binding to its extracellular domain, probably at a site different from channel inhibitors. Increases both mean open time and open probability of KscA. This is Toxin Tx7335 from Dendroaspis angusticeps (Eastern green mamba).